The primary structure comprises 269 residues: 3-methyl-2-oxobutanoate hydroxymethyltransferase (269 aa).

The Mg(2+) site is built by D49 and D88. Residues 49 to 50 (DS), D88, and K118 each bind 3-methyl-2-oxobutanoate. Residue E120 participates in Mg(2+) binding. Catalysis depends on E186, which acts as the Proton acceptor.

Belongs to the PanB family. In terms of assembly, homodecamer; pentamer of dimers. It depends on Mg(2+) as a cofactor.

The protein resides in the cytoplasm. It catalyses the reaction 3-methyl-2-oxobutanoate + (6R)-5,10-methylene-5,6,7,8-tetrahydrofolate + H2O = 2-dehydropantoate + (6S)-5,6,7,8-tetrahydrofolate. It functions in the pathway cofactor biosynthesis; (R)-pantothenate biosynthesis; (R)-pantoate from 3-methyl-2-oxobutanoate: step 1/2. Its function is as follows. Catalyzes the reversible reaction in which hydroxymethyl group from 5,10-methylenetetrahydrofolate is transferred onto alpha-ketoisovalerate to form ketopantoate. The polypeptide is 3-methyl-2-oxobutanoate hydroxymethyltransferase (Pelobacter propionicus (strain DSM 2379 / NBRC 103807 / OttBd1)).